Consider the following 356-residue polypeptide: tRNA N6-adenosine threonylcarbamoyltransferase (356 aa).

Fe cation-binding residues include His-115 and His-119. Residues 138 to 142 (LVSGG), Asp-171, Gly-184, and Asn-283 contribute to the substrate site. Asp-311 lines the Fe cation pocket.

The protein belongs to the KAE1 / TsaD family. The cofactor is Fe(2+).

The protein resides in the cytoplasm. It carries out the reaction L-threonylcarbamoyladenylate + adenosine(37) in tRNA = N(6)-L-threonylcarbamoyladenosine(37) in tRNA + AMP + H(+). In terms of biological role, required for the formation of a threonylcarbamoyl group on adenosine at position 37 (t(6)A37) in tRNAs that read codons beginning with adenine. Is involved in the transfer of the threonylcarbamoyl moiety of threonylcarbamoyl-AMP (TC-AMP) to the N6 group of A37, together with TsaE and TsaB. TsaD likely plays a direct catalytic role in this reaction. The polypeptide is tRNA N6-adenosine threonylcarbamoyltransferase (Prochlorococcus marinus subsp. pastoris (strain CCMP1986 / NIES-2087 / MED4)).